The sequence spans 388 residues: Tryptophan synthase beta chain 1 (388 aa).

Lysine 82 carries the N6-(pyridoxal phosphate)lysine modification.

It belongs to the TrpB family. In terms of assembly, tetramer of two alpha and two beta chains. Pyridoxal 5'-phosphate is required as a cofactor.

The catalysed reaction is (1S,2R)-1-C-(indol-3-yl)glycerol 3-phosphate + L-serine = D-glyceraldehyde 3-phosphate + L-tryptophan + H2O. The protein operates within amino-acid biosynthesis; L-tryptophan biosynthesis; L-tryptophan from chorismate: step 5/5. Its function is as follows. The beta subunit is responsible for the synthesis of L-tryptophan from indole and L-serine. This is Tryptophan synthase beta chain 1 (trpB1) from Pyrococcus abyssi (strain GE5 / Orsay).